The following is a 297-amino-acid chain: Polyamine aminopropyltransferase 2 (297 aa).

The PABS domain maps to 26-258 (FYWEPDVEGG…DLWTFFVALK (233 aa)). Q53 contributes to the S-methyl-5'-thioadenosine binding site. 2 residues coordinate spermidine: H84 and E108. S-methyl-5'-thioadenosine contacts are provided by residues D128 and 157 to 158 (DV). The Proton acceptor role is filled by D176. An S-methyl-5'-thioadenosine-binding site is contributed by P184.

It belongs to the spermidine/spermine synthase family. Homodimer or homotetramer.

The protein localises to the cytoplasm. It catalyses the reaction S-adenosyl 3-(methylsulfanyl)propylamine + putrescine = S-methyl-5'-thioadenosine + spermidine + H(+). It participates in amine and polyamine biosynthesis; spermidine biosynthesis; spermidine from putrescine: step 1/1. In terms of biological role, catalyzes the irreversible transfer of a propylamine group from the amino donor S-adenosylmethioninamine (decarboxy-AdoMet) to putrescine (1,4-diaminobutane) to yield spermidine. The protein is Polyamine aminopropyltransferase 2 of Caldanaerobacter subterraneus subsp. tengcongensis (strain DSM 15242 / JCM 11007 / NBRC 100824 / MB4) (Thermoanaerobacter tengcongensis).